The sequence spans 124 residues: Fluoride-specific ion channel FluC (124 aa).

Transmembrane regions (helical) follow at residues 4–24, 32–52, 67–87, and 101–121; these read VLYI…LSGW, AFPY…GLIM, IGLT…SYET, and ANVL…IIVA. Residues glycine 75 and threonine 78 each coordinate Na(+).

This sequence belongs to the fluoride channel Fluc/FEX (TC 1.A.43) family.

The protein resides in the cell inner membrane. It carries out the reaction fluoride(in) = fluoride(out). With respect to regulation, na(+) is not transported, but it plays an essential structural role and its presence is essential for fluoride channel function. Its function is as follows. Fluoride-specific ion channel. Important for reducing fluoride concentration in the cell, thus reducing its toxicity. The sequence is that of Fluoride-specific ion channel FluC from Geotalea uraniireducens (strain Rf4) (Geobacter uraniireducens).